A 560-amino-acid chain; its full sequence is Putative transport protein VP1232 (560 aa).

The next 5 helical transmembrane spans lie at Leu8 to Gly28, Leu37 to Phe57, Phe66 to Phe86, His91 to Ser111, and Val164 to Leu184. 2 RCK C-terminal domains span residues Leu205–Gly292 and Lys293–Phe376. The next 6 helical transmembrane spans lie at Leu386–Phe406, Val409–Leu429, Ala443–Ala463, Val478–Ala498, Ala506–Asn526, and Ala539–Leu559.

Belongs to the AAE transporter (TC 2.A.81) family. YbjL subfamily.

It is found in the cell membrane. The chain is Putative transport protein VP1232 from Vibrio parahaemolyticus serotype O3:K6 (strain RIMD 2210633).